A 129-amino-acid chain; its full sequence is Large ribosomal subunit protein uL22 (129 aa).

This sequence belongs to the universal ribosomal protein uL22 family. As to quaternary structure, part of the 50S ribosomal subunit.

Its function is as follows. This protein binds specifically to 23S rRNA; its binding is stimulated by other ribosomal proteins, e.g. L4, L17, and L20. It is important during the early stages of 50S assembly. It makes multiple contacts with different domains of the 23S rRNA in the assembled 50S subunit and ribosome. Functionally, the globular domain of the protein is located near the polypeptide exit tunnel on the outside of the subunit, while an extended beta-hairpin is found that lines the wall of the exit tunnel in the center of the 70S ribosome. The polypeptide is Large ribosomal subunit protein uL22 (Onion yellows phytoplasma (strain OY-M)).